Reading from the N-terminus, the 227-residue chain is 2,3-bisphosphoglycerate-dependent phosphoglycerate mutase (227 aa).

Substrate is bound by residues 7 to 14 (RHGLSEWN), 20 to 21 (TG), arginine 59, 86 to 89 (ERHY), lysine 97, 113 to 114 (RR), and 182 to 183 (GN). Histidine 8 acts as the Tele-phosphohistidine intermediate in catalysis. The Proton donor/acceptor role is filled by glutamate 86.

It belongs to the phosphoglycerate mutase family. BPG-dependent PGAM subfamily. As to quaternary structure, homodimer.

It carries out the reaction (2R)-2-phosphoglycerate = (2R)-3-phosphoglycerate. Its pathway is carbohydrate degradation; glycolysis; pyruvate from D-glyceraldehyde 3-phosphate: step 3/5. In terms of biological role, catalyzes the interconversion of 2-phosphoglycerate and 3-phosphoglycerate. The polypeptide is 2,3-bisphosphoglycerate-dependent phosphoglycerate mutase (Actinobacillus succinogenes (strain ATCC 55618 / DSM 22257 / CCUG 43843 / 130Z)).